The primary structure comprises 37 residues: Mating pheromone Er-22 (37 aa).

3 disulfides stabilise this stretch: Cys3–Cys18, Cys10–Cys32, and Cys15–Cys24.

It is found in the secreted. In terms of biological role, mating ciliate pheromones (or gamones) are diffusible extracellular communication signals that distinguish different intraspecific classes of cells commonly referred to as 'mating types'. They prepare the latter for conjugation by changing their cell surface properties. This Euplotes raikovi protein is Mating pheromone Er-22 (MAT22).